Reading from the N-terminus, the 429-residue chain is Small ribosomal subunit protein mS47 (429 aa).

Glu141, Gly166, Glu189, and Asp197 together coordinate substrate.

The protein belongs to the enoyl-CoA hydratase/isomerase family. Mitochondrion-specific ribosomal protein mS47 subfamily. In terms of assembly, component of the mitochondrial small ribosomal subunit (mt-SSU). Mature yeast 74S mitochondrial ribosomes consist of a small (37S) and a large (54S) subunit. The 37S small subunit contains a 15S ribosomal RNA (15S mt-rRNA) and at least 32 different proteins. The 54S large subunit contains a 21S rRNA (21S mt-rRNA) and at least 45 different proteins. mS47/snr1 forms a protuberance of the yeast mitoribosome and retains a solvent-exposed cavity likely capable of accommodating a substrate, in accordance with it being an active enzyme as well as an integral constituent of the mitoribosome.

It is found in the mitochondrion. It catalyses the reaction 3-hydroxy-2-methylpropanoyl-CoA + H2O = 3-hydroxy-2-methylpropanoate + CoA + H(+). It participates in amino-acid degradation; L-valine degradation. Functionally, component of the mitochondrial ribosome (mitoribosome), a dedicated translation machinery responsible for the synthesis of mitochondrial genome-encoded proteins, including at least some of the essential transmembrane subunits of the mitochondrial respiratory chain. The mitoribosomes are attached to the mitochondrial inner membrane and translation products are cotranslationally integrated into the membrane. mS47/snr1 has enzymatic activity in vitro, and is able to catalyze the specific hydrolysis of 3-hydroxyisobutyryl-CoA (HIBYL-CoA). However, because the turnover rate of mS47/snr1 is only a fraction of that of the homologous mammalian enzyme, the physiological function of this activity remains unclear. Has an indirect role in endocytic membrane trafficking. The polypeptide is Small ribosomal subunit protein mS47 (snr1) (Schizosaccharomyces pombe (strain 972 / ATCC 24843) (Fission yeast)).